Consider the following 642-residue polypeptide: Chaperone protein DnaK (642 aa).

Thr-200 bears the Phosphothreonine; by autocatalysis mark. The segment covering 603–623 has biased composition (low complexity); that stretch reads AAAAEQGGNADAASGNAQASK. A disordered region spans residues 603 to 627; the sequence is AAAAEQGGNADAASGNAQASKAADD.

It belongs to the heat shock protein 70 family.

Acts as a chaperone. In Xanthomonas campestris pv. campestris (strain B100), this protein is Chaperone protein DnaK.